The following is an 833-amino-acid chain: Leucine--tRNA ligase (833 aa).

The short motif at 41-52 is the 'HIGH' region element; the sequence is PYPSGAGLHVGH. The 'KMSKS' region signature appears at 610-614; sequence KMSKS. Lys613 serves as a coordination point for ATP.

Belongs to the class-I aminoacyl-tRNA synthetase family.

The protein localises to the cytoplasm. It catalyses the reaction tRNA(Leu) + L-leucine + ATP = L-leucyl-tRNA(Leu) + AMP + diphosphate. The protein is Leucine--tRNA ligase of Streptococcus pyogenes serotype M18 (strain MGAS8232).